The following is a 438-amino-acid chain: 3-phosphoshikimate 1-carboxyvinyltransferase (438 aa).

3-phosphoshikimate is bound by residues K20, S21, and R25. K20 contacts phosphoenolpyruvate. G90 and R118 together coordinate phosphoenolpyruvate. 6 residues coordinate 3-phosphoshikimate: S163, S164, Q165, S191, D320, and K347. Q165 lines the phosphoenolpyruvate pocket. The Proton acceptor role is filled by D320. R351 and R392 together coordinate phosphoenolpyruvate.

This sequence belongs to the EPSP synthase family. Monomer.

Its subcellular location is the cytoplasm. It catalyses the reaction 3-phosphoshikimate + phosphoenolpyruvate = 5-O-(1-carboxyvinyl)-3-phosphoshikimate + phosphate. The protein operates within metabolic intermediate biosynthesis; chorismate biosynthesis. In terms of biological role, catalyzes the transfer of the enolpyruvyl moiety of phosphoenolpyruvate (PEP) to the 5-hydroxyl of shikimate-3-phosphate (S3P) to produce enolpyruvyl shikimate-3-phosphate and inorganic phosphate. This Natronomonas pharaonis (strain ATCC 35678 / DSM 2160 / CIP 103997 / JCM 8858 / NBRC 14720 / NCIMB 2260 / Gabara) (Halobacterium pharaonis) protein is 3-phosphoshikimate 1-carboxyvinyltransferase.